Reading from the N-terminus, the 328-residue chain is MHNSLAELIKPRTVEVVPHGSHSARVVIEPLERGFGHTLGNALRRVLLSAIPGAAVTDVVIDGVLHEYSTIEGVQEDVIDVLLNLKNLAIRLNGPHDVYLNVDKHGPGPVLAGDIEASHDVEVLNPELLIAHINGNGRLRMTLHVQKGRGYQPVANRAIEGDSAIGTLHLDASFSPIKKVSYVVESARVEQRTDLDRLVIELQTNGTVQPEEAVKHAANILNQHLAILVDLKGEDLPLFGEDGPQFDPLLLHPVDDLELTVRSANCLKAENIFYIGDLIQRSEADLLKTPNLGKKSLTEIKDVLATKGLSLGMRLENWPPEGLKKLNQ.

Positions 1–232 are alpha N-terminal domain (alpha-NTD); sequence MHNSLAELIK…QHLAILVDLK (232 aa). The segment at 246–328 is alpha C-terminal domain (alpha-CTD); it reads FDPLLLHPVD…PPEGLKKLNQ (83 aa).

The protein belongs to the RNA polymerase alpha chain family. In terms of assembly, homodimer. The RNAP catalytic core consists of 2 alpha, 1 beta, 1 beta' and 1 omega subunit. When a sigma factor is associated with the core the holoenzyme is formed, which can initiate transcription.

It carries out the reaction RNA(n) + a ribonucleoside 5'-triphosphate = RNA(n+1) + diphosphate. Functionally, DNA-dependent RNA polymerase catalyzes the transcription of DNA into RNA using the four ribonucleoside triphosphates as substrates. The sequence is that of DNA-directed RNA polymerase subunit alpha from Methylococcus capsulatus (strain ATCC 33009 / NCIMB 11132 / Bath).